Here is a 637-residue protein sequence, read N- to C-terminus: MMPFPVTTQGPPQPAPPPNRYGVSSPISLAVPKETDCLLTQRLIETLRPFGVFEEEEELQRRILVLEKLNNLVKEWIREISESKSLPQSVIENVGGKIFTFGSYRLGVHTKGADIDALCVAPSHVDRSDFFTSFYAKLKLQEEVKDLRAVEEAFVPVIKLCFDGIEIDILFARLALQTIPEDLDLRDDSLLKNLDIRCIRSLNGCRVTDEILHLVPNIDNFRLTLRAIKLWAKCHNIYSNILGFLGGVSWAMLVARTCQLYPNAVASTLVRKFFLVFSEWEWPNPVLLKEPEERNLNLPVWDPRVNPSDRYHLMPIITPAYPQQNSTYNVSISTRMVMIEEFKQGLAITHEILLSKAEWSKLFEAPSFFQKYKHYIVLLASASTEKQHLEWVGLVESKIRILVGSLEKNEFITLAHVNPQSFPAPKENPDMEEFRTMWVIGLGLKKPDNSEILSIDLTYDIQSFTDTVYRQAVNSKMFEMGMKITAMHLRRKELHQLLPHHVLQDKKAHSTEGRRLTDLNDSSFDLSAGCENSMSVPSSTSTMKTGPLISSSQGRNSPALAVMTASVANIQATEFSLQQVNTNESSGVALNESIPHAVSQPAISPSPKAMVARVVSSTCLISHPDLQETQQQTYLIL.

Over residues 1–10 (MMPFPVTTQG) the composition is skewed to low complexity. The interval 1 to 23 (MMPFPVTTQGPPQPAPPPNRYGV) is disordered. Residues 101–103 (FGS), Thr110, 114–116 (DID), Asp168, Lys229, Tyr238, and 247–248 (GV) contribute to the ATP site. Mg(2+) is bound by residues Asp114, Asp116, and Asp168. The tract at residues 535–555 (SVPSSTSTMKTGPLISSSQGR) is disordered.

This sequence belongs to the poly(A) polymerase family. Interacts with GSG1. Mg(2+) is required as a cofactor. It depends on Mn(2+) as a cofactor. Testis specific.

The protein localises to the nucleus. The enzyme catalyses RNA(n) + ATP = RNA(n)-3'-adenine ribonucleotide + diphosphate. This is Poly(A) polymerase beta from Homo sapiens (Human).